We begin with the raw amino-acid sequence, 211 residues long: Protein-L-isoaspartate O-methyltransferase (211 aa).

S60 is a catalytic residue.

The protein belongs to the methyltransferase superfamily. L-isoaspartyl/D-aspartyl protein methyltransferase family.

The protein localises to the cytoplasm. The enzyme catalyses [protein]-L-isoaspartate + S-adenosyl-L-methionine = [protein]-L-isoaspartate alpha-methyl ester + S-adenosyl-L-homocysteine. Catalyzes the methyl esterification of L-isoaspartyl residues in peptides and proteins that result from spontaneous decomposition of normal L-aspartyl and L-asparaginyl residues. It plays a role in the repair and/or degradation of damaged proteins. The protein is Protein-L-isoaspartate O-methyltransferase of Alteromonas mediterranea (strain DSM 17117 / CIP 110805 / LMG 28347 / Deep ecotype).